Consider the following 368-residue polypeptide: Peptide chain release factor 2 (368 aa).

Gln-249 bears the N5-methylglutamine mark.

It belongs to the prokaryotic/mitochondrial release factor family. Methylated by PrmC. Methylation increases the termination efficiency of RF2.

Its subcellular location is the cytoplasm. Functionally, peptide chain release factor 2 directs the termination of translation in response to the peptide chain termination codons UGA and UAA. This Rhodococcus erythropolis (strain PR4 / NBRC 100887) protein is Peptide chain release factor 2.